A 358-amino-acid chain; its full sequence is CX3C chemokine receptor 1 (358 aa).

The Extracellular segment spans residues 1 to 26 (MHTTLPESTSENFEYYDLAEACDMGD). A helical transmembrane segment spans residues 27 to 47 (IVALGTVFVVILYSLVFAFGL). The Cytoplasmic segment spans residues 48–68 (VGNLLVVFALINSQRSKSITD). Residues 69–89 (IYLLNLALSDLLFVATLPFWT) form a helical membrane-spanning segment. Topologically, residues 90–105 (HYVINEQGLHHATCKL) are extracellular. A disulfide bridge links Cys-103 with Cys-176. A helical membrane pass occupies residues 106-126 (ITAFFFIGFFGGIFFITVISV). Residues 127-147 (DRFLAIVLAANSMSNRTVQHG) lie on the Cytoplasmic side of the membrane. The helical transmembrane segment at 148 to 168 (VTTSLGVWAAAILVATPQFMF) threads the bilayer. Residues 169–186 (TREKENECFGDYPEILQE) lie on the Extracellular side of the membrane. Residues 187–207 (IWPVILNTEINFLGFLLPLLI) traverse the membrane as a helical segment. The Cytoplasmic portion of the chain corresponds to 208-232 (MSYCYFRIMQTLFSCKNHKKAKAIR). The chain crosses the membrane as a helical span at residues 233–253 (LIFLVVVVFFLFWTPYNVMIF). Residues 254–275 (LQTLNLYDFFPKCDVKRDLKLA) lie on the Extracellular side of the membrane. A helical transmembrane segment spans residues 276 to 296 (ISVTETIAFSHCCLNPLIYAF). Residues 297–358 (AGEKFRRYLY…TSDGDASILL (62 aa)) are Cytoplasmic-facing. At Thr-349 the chain carries Phosphothreonine.

Belongs to the G-protein coupled receptor 1 family. Found in a ternary complex with CX3CL1 and ITGAV:ITGB3 or ITGA4:ITGB1. Post-translationally, this protein is not N-glycosylated which is unusual for G-protein-coupled receptors.

It is found in the cell membrane. Its function is as follows. Receptor for the C-X3-C chemokine fractalkine (CX3CL1) present on many early leukocyte cells; CX3CR1-CX3CL1 signaling exerts distinct functions in different tissue compartments, such as immune response, inflammation, cell adhesion and chemotaxis. CX3CR1-CX3CL1 signaling mediates cell migratory functions. Responsible for the recruitment of natural killer (NK) cells to inflamed tissues. Acts as a regulator of inflammation process leading to atherogenesis by mediating macrophage and monocyte recruitment to inflamed atherosclerotic plaques, promoting cell survival. Involved in airway inflammation by promoting interleukin 2-producing T helper (Th2) cell survival in inflamed lung. Involved in the migration of circulating monocytes to non-inflamed tissues, where they differentiate into macrophages and dendritic cells. Acts as a negative regulator of angiogenesis, probably by promoting macrophage chemotaxis. Plays a key role in brain microglia by regulating inflammatory response in the central nervous system (CNS) and regulating synapse maturation. Required to restrain the microglial inflammatory response in the CNS and the resulting parenchymal damage in response to pathological stimuli. Involved in brain development by participating in synaptic pruning, a natural process during which brain microglia eliminates extra synapses during postnatal development. Synaptic pruning by microglia is required to promote the maturation of circuit connectivity during brain development. Acts as an important regulator of the gut microbiota by controlling immunity to intestinal bacteria and fungi. Expressed in lamina propria dendritic cells in the small intestine, which form transepithelial dendrites capable of taking up bacteria in order to provide defense against pathogenic bacteria. Required to initiate innate and adaptive immune responses against dissemination of commensal fungi (mycobiota) component of the gut: expressed in mononuclear phagocytes (MNPs) and acts by promoting induction of antifungal IgG antibodies response to confer protection against disseminated C.albicans or C.auris infection. Also acts as a receptor for C-C motif chemokine CCL26, inducing cell chemotaxis. The polypeptide is CX3C chemokine receptor 1 (Bos taurus (Bovine)).